A 260-amino-acid chain; its full sequence is Methylphosphonate hydroxylase (260 aa).

Lysine 107 contacts 2-oxoglutarate. Positions 117, 119, and 195 each coordinate Fe cation.

This sequence belongs to the PhyH family. The cofactor is Fe(2+).

The catalysed reaction is methylphosphonate + 2-oxoglutarate + O2 = hydroxymethylphosphonate + succinate + CO2. Its function is as follows. Part of an oxidative pathway for utilization of methylphosphonic acid as a phosphate source. Catalyzes the conversion of methylphosphonic acid to hydroxymethylphosphonic acid. Is specific for the hydroxylation of methylphosphonate. The sequence is that of Methylphosphonate hydroxylase from Gimesia maris (strain ATCC 29201 / DSM 8797 / 534-30) (Planctomyces maris).